The chain runs to 188 residues: Peptidyl-tRNA hydrolase (188 aa).

Residue F15 participates in tRNA binding. The active-site Proton acceptor is the H20. Y64, N66, and N112 together coordinate tRNA.

Belongs to the PTH family. Monomer.

The protein resides in the cytoplasm. It carries out the reaction an N-acyl-L-alpha-aminoacyl-tRNA + H2O = an N-acyl-L-amino acid + a tRNA + H(+). Its function is as follows. Hydrolyzes ribosome-free peptidyl-tRNAs (with 1 or more amino acids incorporated), which drop off the ribosome during protein synthesis, or as a result of ribosome stalling. Functionally, catalyzes the release of premature peptidyl moieties from peptidyl-tRNA molecules trapped in stalled 50S ribosomal subunits, and thus maintains levels of free tRNAs and 50S ribosomes. The polypeptide is Peptidyl-tRNA hydrolase (Borreliella burgdorferi (strain ATCC 35210 / DSM 4680 / CIP 102532 / B31) (Borrelia burgdorferi)).